Reading from the N-terminus, the 272-residue chain is Formamidopyrimidine-DNA glycosylase (272 aa).

The active-site Schiff-base intermediate with DNA is the P2. Catalysis depends on E3, which acts as the Proton donor. Residue K56 is the Proton donor; for beta-elimination activity of the active site. DNA is bound by residues H89, R108, and K149. The segment at 234–268 (LAYGRAGEMCVNCETPLENLKLGQRASVFCPQCQP) adopts an FPG-type zinc-finger fold. The active-site Proton donor; for delta-elimination activity is the R258.

This sequence belongs to the FPG family. As to quaternary structure, monomer. Zn(2+) is required as a cofactor.

The enzyme catalyses Hydrolysis of DNA containing ring-opened 7-methylguanine residues, releasing 2,6-diamino-4-hydroxy-5-(N-methyl)formamidopyrimidine.. It carries out the reaction 2'-deoxyribonucleotide-(2'-deoxyribose 5'-phosphate)-2'-deoxyribonucleotide-DNA = a 3'-end 2'-deoxyribonucleotide-(2,3-dehydro-2,3-deoxyribose 5'-phosphate)-DNA + a 5'-end 5'-phospho-2'-deoxyribonucleoside-DNA + H(+). Its function is as follows. Involved in base excision repair of DNA damaged by oxidation or by mutagenic agents. Acts as a DNA glycosylase that recognizes and removes damaged bases. Has a preference for oxidized purines, such as 7,8-dihydro-8-oxoguanine (8-oxoG). Has AP (apurinic/apyrimidinic) lyase activity and introduces nicks in the DNA strand. Cleaves the DNA backbone by beta-delta elimination to generate a single-strand break at the site of the removed base with both 3'- and 5'-phosphates. This Acinetobacter baylyi (strain ATCC 33305 / BD413 / ADP1) protein is Formamidopyrimidine-DNA glycosylase.